We begin with the raw amino-acid sequence, 609 residues long: DNA polymerase alpha subunit B (609 aa).

Serine 155 is subject to Phosphoserine. Threonine 164 carries the post-translational modification Phosphothreonine. 2 positions are modified to phosphoserine: serine 166 and serine 168.

It belongs to the DNA polymerase alpha subunit B family. As to quaternary structure, component of the alpha DNA polymerase complex (also known as the alpha DNA polymerase-primase complex) consisting of four subunits: the catalytic subunit PolA1, the regulatory subunit PolA2, and the primase complex subunits Prim1 and Prim2 respectively. PolA1 associates with the DNA primase complex before association with PolA2. Phosphorylated in embryos until cycle 13. Expressed in embryos (at protein level).

The protein resides in the nucleus. Accessory subunit of the DNA polymerase alpha complex (also known as the alpha DNA polymerase-primase complex) which plays an essential role in the initiation of DNA synthesis. During the S phase of the cell cycle, the DNA polymerase alpha complex (composed of a catalytic subunit PolA1, an accessory subunit PolA2 and two primase subunits, the catalytic subunit Prim1 and the regulatory subunit Prim2) is recruited to DNA at the replicative forks. The primase subunit of the polymerase alpha complex initiates DNA synthesis by oligomerising short RNA primers on both leading and lagging strands. These primers are initially extended by the polymerase alpha catalytic subunit and subsequently transferred to polymerase delta and polymerase epsilon for processive synthesis on the lagging and leading strand, respectively. In Drosophila melanogaster (Fruit fly), this protein is DNA polymerase alpha subunit B.